Reading from the N-terminus, the 169-residue chain is Probable phospholipid hydroperoxide glutathione peroxidase (169 aa).

Cysteine 43 is a catalytic residue.

This sequence belongs to the glutathione peroxidase family. As to expression, germinating seed, apex, flower, as well as in stressed tissues.

The protein resides in the cytoplasm. It catalyses the reaction a hydroperoxy polyunsaturated fatty acid + 2 glutathione = a hydroxy polyunsaturated fatty acid + glutathione disulfide + H2O. In terms of biological role, protects cells and enzymes from oxidative damage, by catalyzing the reduction of hydrogen peroxide, lipid peroxides and organic hydroperoxide, by glutathione. The sequence is that of Probable phospholipid hydroperoxide glutathione peroxidase from Nicotiana sylvestris (Wood tobacco).